Consider the following 304-residue polypeptide: UDP-N-acetylenolpyruvoylglucosamine reductase (304 aa).

One can recognise an FAD-binding PCMH-type domain in the interval 34–198 (IGGKADFLVW…LEVVFALQPG (165 aa)). The active site involves R177. Catalysis depends on S227, which acts as the Proton donor. E297 is an active-site residue.

Belongs to the MurB family. It depends on FAD as a cofactor.

Its subcellular location is the cytoplasm. The catalysed reaction is UDP-N-acetyl-alpha-D-muramate + NADP(+) = UDP-N-acetyl-3-O-(1-carboxyvinyl)-alpha-D-glucosamine + NADPH + H(+). It functions in the pathway cell wall biogenesis; peptidoglycan biosynthesis. Its function is as follows. Cell wall formation. The sequence is that of UDP-N-acetylenolpyruvoylglucosamine reductase from Geobacillus thermodenitrificans (strain NG80-2).